A 401-amino-acid polypeptide reads, in one-letter code: Argininosuccinate synthase (401 aa).

9 to 17 (AYSGGLDTS) is an ATP binding site. Tyr-87 provides a ligand contact to L-citrulline. Gly-117 serves as a coordination point for ATP. L-aspartate contacts are provided by Thr-119, Asn-123, and Asp-124. Asn-123 contacts L-citrulline. Positions 127, 176, 185, 261, and 273 each coordinate L-citrulline.

The protein belongs to the argininosuccinate synthase family. Type 1 subfamily. In terms of assembly, homotetramer.

It localises to the cytoplasm. The catalysed reaction is L-citrulline + L-aspartate + ATP = 2-(N(omega)-L-arginino)succinate + AMP + diphosphate + H(+). It participates in amino-acid biosynthesis; L-arginine biosynthesis; L-arginine from L-ornithine and carbamoyl phosphate: step 2/3. This Prosthecochloris aestuarii (strain DSM 271 / SK 413) protein is Argininosuccinate synthase.